The chain runs to 176 residues: Small ribosomal subunit protein uS4 (176 aa).

In terms of domain architecture, S4 RNA-binding spans arginine 104–proline 166.

It belongs to the universal ribosomal protein uS4 family. As to quaternary structure, part of the 30S ribosomal subunit. Contacts protein S5. The interaction surface between S4 and S5 is involved in control of translational fidelity.

In terms of biological role, one of the primary rRNA binding proteins, it binds directly to 16S rRNA where it nucleates assembly of the body of the 30S subunit. Functionally, with S5 and S12 plays an important role in translational accuracy. In Sulfolobus acidocaldarius (strain ATCC 33909 / DSM 639 / JCM 8929 / NBRC 15157 / NCIMB 11770), this protein is Small ribosomal subunit protein uS4 (rps4).